Reading from the N-terminus, the 679-residue chain is Stress-70 protein, mitochondrial (679 aa).

The N-terminal 46 residues, 1–46, are a transit peptide targeting the mitochondrion; that stretch reads MISASRAVAARLVGAAASRGPTAARHQDGWNGLSHEAFRIVSRRDY. The tract at residues 1 to 432 is interaction with NFS1; the sequence is MISASRAVAA…IQGGVLAGDV (432 aa). The ADP site is built by T63 and N64. Residues 63 to 431 are nucleotide-binding domain (NBD); it reads TNSCVAVMEG…AIQGGVLAGD (369 aa). K76 is modified (N6-acetyllysine). T87 is subject to Phosphothreonine. Residues K135 and K138 each carry the N6-acetyllysine; alternate modification. An N6-succinyllysine; alternate mark is found at K135 and K138. An N6-acetyllysine modification is found at K143. Residue K206 is modified to N6-acetyllysine; alternate. K206 carries the post-translational modification N6-succinyllysine; alternate. At K206 the chain carries N6-malonyllysine; alternate. K234 and K288 each carry N6-acetyllysine. K300 bears the N6-acetyllysine; alternate mark. N6-succinyllysine; alternate is present on K300. Positions 313, 316, and 320 each coordinate ADP. At K368 the chain carries N6-succinyllysine. Residues G388 and R391 each coordinate ADP. At K394 the chain carries N6-succinyllysine. S408 carries the phosphoserine modification. The tract at residues 432-441 is interdomain linker; sequence VTDVLLLDVT. An interaction with FXN and ISCU region spans residues 432–679; sequence VTDVLLLDVT…QKEDQKEEKQ (248 aa). Positions 442-679 are substrate-binding domain (SBD); it reads PLSLGIETLG…QKEDQKEEKQ (238 aa). R513 is subject to Omega-N-methylarginine. An N6-acetyllysine; alternate mark is found at K567 and K600. An N6-succinyllysine; alternate mark is found at K567 and K600. At K610 the chain carries N6-succinyllysine. K612 carries the post-translational modification N6-acetyllysine. At K646 the chain carries N6-acetyllysine; alternate. K646 is subject to N6-succinyllysine; alternate. Positions 656 to 679 are disordered; it reads ASEREGSGSSGTGEQKEDQKEEKQ. The span at 669–679 shows a compositional bias: basic and acidic residues; sequence EQKEDQKEEKQ.

The protein belongs to the heat shock protein 70 family. Interacts strongly with the intermediate form of FXN and weakly with its mature form. Interacts with HSCB. Associates with the mitochondrial contact site and cristae organizing system (MICOS) complex, composed of at least MICOS10/MIC10, CHCHD3/MIC19, CHCHD6/MIC25, APOOL/MIC27, IMMT/MIC60, APOO/MIC23/MIC26 and QIL1/MIC13. This complex was also known under the names MINOS or MitOS complex. The MICOS complex associates with mitochondrial outer membrane proteins SAMM50, MTX1, MTX2 and DNAJC11, mitochondrial inner membrane protein TMEM11 and with HSPA9. Interacts with DNLZ, the interaction is required to prevent self-aggregation. Interacts with TESPA1. Interacts with PDPN. Interacts with NFU1, NFS1 and ISCU. Interacts with TP53; the interaction promotes TP53 degradation. Interacts (via SBD domain) with UBXN2A; the interaction with UBXN2A inhibits HSPA9/MOT-2 interaction with and degradation of TP53, thereby promotes TP53 translocation to the nucleus. Interacts with ITPR1 AND VDAC1; this interaction couples ITPR1 to VDAC1. Component of the TIM23 mitochondrial inner membrane pre-sequence translocase complex.

It localises to the mitochondrion. The protein localises to the nucleus. The protein resides in the nucleolus. It is found in the cytoplasm. Its subcellular location is the mitochondrion matrix. The enzyme catalyses ATP + H2O = ADP + phosphate + H(+). The chaperone activity is regulated by ATP-induced allosteric coupling of the nucleotide-binding (NBD) and substrate-binding (SBD) domains. ATP binding in the nucleotide-binding pocket (NBP) leads to a conformational change in the NBD, which is transferred through the interdomain linker (IDL) to the substrate-binding domain (SBD). This elicits a reduced substrate affinity and a faster substrate exchange rate. Upon hydrolysis of ATP to ADP, the protein undergoes a conformational change that increases its affinity for substrate proteins. It cycles through repeated phases of ATP hydrolysis and nucleotide exchange, facilitating repeated cycles of substrate binding and release. Functions in collaboration with co-chaperones. Functions with the co-chaperone, DNLZ, to maintain solubility and regulate ATP hydrolysis. Nucleotide exchange factors, GRPEL1 and GRPEL2, accelerate nucleotide exchange. Its function is as follows. Mitochondrial chaperone that plays a key role in mitochondrial protein import, folding, and assembly. Plays an essential role in the protein quality control system, the correct folding of proteins, the re-folding of misfolded proteins, and the targeting of proteins for subsequent degradation. These processes are achieved through cycles of ATP binding, ATP hydrolysis, and ADP release, mediated by co-chaperones. In mitochondria, it associates with the TIM (translocase of the inner membrane) protein complex to assist in the import and folding of mitochondrial proteins. Plays an important role in mitochondrial iron-sulfur cluster (ISC) biogenesis, interacts with and stabilizes ISC cluster assembly proteins FXN, NFU1, NFS1 and ISCU. Regulates erythropoiesis via stabilization of ISC assembly. Regulates mitochondrial calcium-dependent apoptosis by coupling two calcium channels, ITPR1 and VDAC1, at the mitochondria-associated endoplasmic reticulum (ER) membrane to facilitate calcium transport from the ER lumen to the mitochondria intermembrane space, providing calcium for the downstream calcium channel MCU, which releases it into the mitochondrial matrix. Although primarily located in the mitochondria, it is also found in other cellular compartments. In the cytosol, it associates with proteins involved in signaling, apoptosis, or senescence. It may play a role in cell cycle regulation via its interaction with and promotion of degradation of TP53. May play a role in the control of cell proliferation and cellular aging. Protects against reactive oxygen species (ROS). Extracellular HSPA9 plays a cytoprotective role by preventing cell lysis following immune attack by the membrane attack complex by disrupting formation of the complex. This is Stress-70 protein, mitochondrial from Pongo abelii (Sumatran orangutan).